Here is a 258-residue protein sequence, read N- to C-terminus: MMAKRIIPCLDVKAGRVVKGVQFEGLVDAGDPVEAAKRYDEEGADELTFLDITATHEDRGIMEDVVRRTAEQVFIPLTVGGGIRTNDDIRRMLVAGADKCSINSAAVKRPEFVREAAEQFGSQCVVVAIDAKCVEHDKHGRPIRWEIFTHGGRQPTGIDALEWAHRMESFGSGEILLTSMDKDGTKSGYALEMTRAISDAVTIPVIASGGVGEPKHLLEGLRQGGADAVLAASIFHFREYTIPQVKRYLRDNHIAVRL.

Catalysis depends on residues Asp11 and Asp130.

Belongs to the HisA/HisF family. In terms of assembly, heterodimer of HisH and HisF.

The protein resides in the cytoplasm. It carries out the reaction 5-[(5-phospho-1-deoxy-D-ribulos-1-ylimino)methylamino]-1-(5-phospho-beta-D-ribosyl)imidazole-4-carboxamide + L-glutamine = D-erythro-1-(imidazol-4-yl)glycerol 3-phosphate + 5-amino-1-(5-phospho-beta-D-ribosyl)imidazole-4-carboxamide + L-glutamate + H(+). It functions in the pathway amino-acid biosynthesis; L-histidine biosynthesis; L-histidine from 5-phospho-alpha-D-ribose 1-diphosphate: step 5/9. In terms of biological role, IGPS catalyzes the conversion of PRFAR and glutamine to IGP, AICAR and glutamate. The HisF subunit catalyzes the cyclization activity that produces IGP and AICAR from PRFAR using the ammonia provided by the HisH subunit. The sequence is that of Imidazole glycerol phosphate synthase subunit HisF from Magnetococcus marinus (strain ATCC BAA-1437 / JCM 17883 / MC-1).